The primary structure comprises 387 residues: S-adenosylmethionine synthase (387 aa).

ATP is bound at residue H16. D18 is a binding site for Mg(2+). E44 lines the K(+) pocket. L-methionine-binding residues include E57 and Q100. Residues 100-110 (QSPDIAQGVDR) form a flexible loop region. ATP contacts are provided by residues 167–169 (DAK), 232–233 (RF), D241, 247–248 (RK), A264, and K268. Residue D241 participates in L-methionine binding. K272 contributes to the L-methionine binding site.

It belongs to the AdoMet synthase family. In terms of assembly, homotetramer; dimer of dimers. Mg(2+) is required as a cofactor. K(+) serves as cofactor.

Its subcellular location is the cytoplasm. The catalysed reaction is L-methionine + ATP + H2O = S-adenosyl-L-methionine + phosphate + diphosphate. It participates in amino-acid biosynthesis; S-adenosyl-L-methionine biosynthesis; S-adenosyl-L-methionine from L-methionine: step 1/1. In terms of biological role, catalyzes the formation of S-adenosylmethionine (AdoMet) from methionine and ATP. The overall synthetic reaction is composed of two sequential steps, AdoMet formation and the subsequent tripolyphosphate hydrolysis which occurs prior to release of AdoMet from the enzyme. In Cupriavidus metallidurans (strain ATCC 43123 / DSM 2839 / NBRC 102507 / CH34) (Ralstonia metallidurans), this protein is S-adenosylmethionine synthase.